We begin with the raw amino-acid sequence, 172 residues long: Ribosome maturation factor RimM (172 aa).

In terms of domain architecture, PRC barrel spans E96 to L169.

It belongs to the RimM family. As to quaternary structure, binds ribosomal protein uS19.

It is found in the cytoplasm. Functionally, an accessory protein needed during the final step in the assembly of 30S ribosomal subunit, possibly for assembly of the head region. Essential for efficient processing of 16S rRNA. May be needed both before and after RbfA during the maturation of 16S rRNA. It has affinity for free ribosomal 30S subunits but not for 70S ribosomes. This chain is Ribosome maturation factor RimM, found in Syntrophomonas wolfei subsp. wolfei (strain DSM 2245B / Goettingen).